The chain runs to 439 residues: Cobyrinate a,c-diamide synthase (439 aa).

Residues 214–235 are disordered; sequence ETARAPPEVATTERNTGDSPAD. The 192-residue stretch at 237 to 428 folds into the GATase cobBQ-type domain; sequence RVAVAQDSAF…CHCHGESGAF (192 aa). The active-site Nucleophile is the Cys317.

The protein belongs to the CobB/CbiA family. Mg(2+) serves as cofactor.

The catalysed reaction is cob(II)yrinate + 2 L-glutamine + 2 ATP + 2 H2O = cob(II)yrinate a,c diamide + 2 L-glutamate + 2 ADP + 2 phosphate + 2 H(+). The protein operates within cofactor biosynthesis; adenosylcobalamin biosynthesis; cob(II)yrinate a,c-diamide from sirohydrochlorin (anaerobic route): step 10/10. In terms of biological role, catalyzes the ATP-dependent amidation of the two carboxylate groups at positions a and c of cobyrinate, using either L-glutamine or ammonia as the nitrogen source. In Haloarcula marismortui (strain ATCC 43049 / DSM 3752 / JCM 8966 / VKM B-1809) (Halobacterium marismortui), this protein is Cobyrinate a,c-diamide synthase.